A 155-amino-acid chain; its full sequence is uncharacterized protein (155 aa).

The signal sequence occupies residues 1 to 19 (MPLSKTLVQKLQQAGMAIA).

This is an uncharacterized protein from Haemophilus influenzae (strain ATCC 51907 / DSM 11121 / KW20 / Rd).